The following is a 201-amino-acid chain: Small ribosomal subunit protein uS4 (201 aa).

Positions 91 to 151 (SRLDNVVYRA…EKSQKMNWFE (61 aa)) constitute an S4 RNA-binding domain.

Belongs to the universal ribosomal protein uS4 family. As to quaternary structure, part of the 30S ribosomal subunit. Contacts protein S5. The interaction surface between S4 and S5 is involved in control of translational fidelity.

One of the primary rRNA binding proteins, it binds directly to 16S rRNA where it nucleates assembly of the body of the 30S subunit. Functionally, with S5 and S12 plays an important role in translational accuracy. This chain is Small ribosomal subunit protein uS4, found in Corynebacterium glutamicum (strain R).